The following is a 239-amino-acid chain: Small ribosomal subunit protein uS3c (239 aa).

In terms of domain architecture, KH type-2 spans 43-139; that stretch reads IKNYIQKNRK…RFNISIEKVK (97 aa). The segment at 50–74 is disordered; the sequence is NRKKGSNRKIESDSSSEVITHNRKM.

It belongs to the universal ribosomal protein uS3 family. Part of the 30S ribosomal subunit.

Its subcellular location is the plastid. The protein resides in the chloroplast. The sequence is that of Small ribosomal subunit protein uS3c (rps3) from Triticum aestivum (Wheat).